The sequence spans 390 residues: Nucleosome assembly protein 1-like 1 (390 aa).

Residues 1-10 show a composition bias toward basic and acidic residues; it reads MADIDNKEQS. The disordered stretch occupies residues 1–32; sequence MADIDNKEQSELDQDLEDVEEVEEEETGEETK. Ala-2 bears the N-acetylalanine mark. Ser-10 bears the Phosphoserine mark. A compositionally biased stretch (acidic residues) spans 11-28; that stretch reads ELDQDLEDVEEVEEEETG. Phosphothreonine is present on residues Thr-62 and Thr-64. Position 69 is a phosphoserine (Ser-69). Position 116 is an N6-acetyllysine (Lys-116). An NAP1L motif motif is present at residues 125 to 150; it reads YEPTEEECEWKPDEEDEVSEELKEKA. Residues 131-143 show a composition bias toward acidic residues; that stretch reads ECEWKPDEEDEVS. Positions 131–163 are disordered; sequence ECEWKPDEEDEVSEELKEKAKIEDEKKDEEKED. Ser-143 bears the Phosphoserine mark. The span at 144 to 163 shows a compositional bias: basic and acidic residues; the sequence is EELKEKAKIEDEKKDEEKED. Positions 272–278 match the Nuclear localization signal motif; it reads IKKKQKH. The segment covering 345 to 375 has biased composition (acidic residues); sequence AIEDDDDDYDEEGEEADEEGEEEGDEENDPD. The tract at residues 345-390 is disordered; it reads AIEDDDDDYDEEGEEADEEGEEEGDEENDPDYDPKKDQNPAECKQQ. A 5-glutamyl polyglycine mark is found at Glu-358 and Glu-359. The segment covering 376–390 has biased composition (basic and acidic residues); it reads YDPKKDQNPAECKQQ. Cys-387 carries the post-translational modification Cysteine methyl ester. Cys-387 carries the S-farnesyl cysteine lipid modification. The propeptide at 388–390 is removed in mature form; sequence KQQ.

The protein belongs to the nucleosome assembly protein (NAP) family. In terms of assembly, homodimer. The dimer binds strongly and sequentially to single and double H2A-H2B heterodimers. Interacts with ERCC6; this interaction increases ERCC6 processivity. Interacts with RAD54. Interacts with SETD1A. Post-translationally, polyglycylated by TTLL10 on glutamate residues, resulting in polyglycine chains on the gamma-carboxyl group. Both polyglutamylation and polyglycylation modifications can coexist on the same protein on adjacent residues, and lowering polyglycylation levels increases polyglutamylation, and reciprocally. In terms of processing, polyglutamylated by TTLL4 on glutamate residues, resulting in polyglutamate chains on the gamma-carboxyl group. Both polyglutamylation and polyglycylation modifications can coexist on the same protein on adjacent residues, and lowering polyglycylation levels increases polyglutamylation, and reciprocally.

The protein localises to the nucleus. Its subcellular location is the melanosome. The protein resides in the cytoplasm. Functionally, histone chaperone that plays a role in the nuclear import of H2A-H2B and nucleosome assembly. Also participates in several important DNA repair mechanisms: greatly enhances ERCC6-mediated chromatin remodeling which is essential for transcription-coupled nucleotide excision DNA repair. Also stimulates homologous recombination (HR) by RAD51 and RAD54 which is essential in mitotic DNA double strand break (DSB) repair. Plays a key role in the regulation of embryonic neurogenesis. Promotes the proliferation of neural progenitors and inhibits neuronal differentiation during cortical development. Regulates neurogenesis via the modulation of RASSF10; regulates RASSF10 expression by promoting SETD1A-mediated H3K4 methylation at the RASSF10 promoter. The chain is Nucleosome assembly protein 1-like 1 (Nap1l1) from Rattus norvegicus (Rat).